The following is a 198-amino-acid chain: uncharacterized protein (198 aa).

The C4-type zinc-finger motif lies at 9-43 (CPVCGGKGTFVITSHQIDIPYFGPVLETTMICEKC).

The protein belongs to the ZPR1 family.

This is an uncharacterized protein from Methanocaldococcus jannaschii (strain ATCC 43067 / DSM 2661 / JAL-1 / JCM 10045 / NBRC 100440) (Methanococcus jannaschii).